A 110-amino-acid polypeptide reads, in one-letter code: UPF0060 membrane protein Psyc_0916 (110 aa).

4 consecutive transmembrane segments (helical) span residues 7–27 (VGLFAITALAEIAGCYLPYLW), 33–53 (SIWLLIPGALSLVAFVWLLSL), 63–83 (AAYGGVYISMAILWLWTVNGI), and 87–107 (TWDIVGSVVALIGMAIIMFAP).

It belongs to the UPF0060 family.

The protein resides in the cell inner membrane. The sequence is that of UPF0060 membrane protein Psyc_0916 from Psychrobacter arcticus (strain DSM 17307 / VKM B-2377 / 273-4).